A 301-amino-acid chain; its full sequence is 4-hydroxybenzoate octaprenyltransferase (301 aa).

A run of 8 helical transmembrane segments spans residues 34 to 54 (IGSLLLLWPTWWALWLAADGL), 57 to 77 (LWTLLVFTAGVWLTRSAGCVI), 108 to 128 (LWVFVVLMLVAFALVLTLNWL), 152 to 172 (LPQVYLGMAFGWGIPMAFAAV), 176 to 196 (VPLLGWLLYAANILWATAYDT), 221 to 241 (FDLIAQGILYALMAATLVLVG), 245 to 265 (DLGVAYWAGLAVAALLVAYEF), and 279 to 299 (AFLHNNWVGLAIFVGIAVAVA).

Belongs to the UbiA prenyltransferase family. The cofactor is Mg(2+).

It localises to the cell inner membrane. The catalysed reaction is all-trans-octaprenyl diphosphate + 4-hydroxybenzoate = 4-hydroxy-3-(all-trans-octaprenyl)benzoate + diphosphate. It functions in the pathway cofactor biosynthesis; ubiquinone biosynthesis. Catalyzes the prenylation of para-hydroxybenzoate (PHB) with an all-trans polyprenyl group. Mediates the second step in the final reaction sequence of ubiquinone-8 (UQ-8) biosynthesis, which is the condensation of the polyisoprenoid side chain with PHB, generating the first membrane-bound Q intermediate 3-octaprenyl-4-hydroxybenzoate. The protein is 4-hydroxybenzoate octaprenyltransferase of Xanthomonas euvesicatoria pv. vesicatoria (strain 85-10) (Xanthomonas campestris pv. vesicatoria).